Reading from the N-terminus, the 558-residue chain is Protein OS-9 homolog (558 aa).

The first 17 residues, 1 to 17 (MLLKSLALIASSSLAAT), serve as a signal peptide directing secretion. N68 is a glycosylation site (N-linked (GlcNAc...) asparagine). An MRH domain is found at 111–237 (GDCLFYEQGF…QVGTPRLCKD (127 aa)). An intrachain disulfide couples C113 to C126. The a mannooligosaccharide derivative site is built by Q133, R197, E219, and Y225. 2 disulfide bridges follow: C190–C223 and C205–C235. Disordered regions lie at residues 435–508 (SKKL…DEDE) and 539–558 (KDLA…GLSD). Residues 441–466 (KKEAASTKREEAKKQVEASVEEKAVD) show a composition bias toward basic and acidic residues. A compositionally biased stretch (polar residues) spans 474–492 (DTVTSTQTFFRTQTLSTAE). Over residues 543 to 558 (DKEDDDDDYEDYGLSD) the composition is skewed to acidic residues.

Belongs to the OS-9 family. As to quaternary structure, interacts with missfolded ER lumenal proteins.

It localises to the endoplasmic reticulum membrane. Its function is as follows. Lectin involved in the quality control of the secretory pathway. As a member of the endoplasmic reticulum-associated degradation lumenal (ERAD-L) surveillance system, targets misfolded endoplasmic reticulum lumenal glycoproteins for degradation. This is Protein OS-9 homolog (YOS9) from Yarrowia lipolytica (strain CLIB 122 / E 150) (Yeast).